A 346-amino-acid chain; its full sequence is Haptoglobin (346 aa).

The N-terminal stretch at 1–18 is a signal peptide; that stretch reads MRALGAVVTLLLWGQLFA. The region spanning 31–87 is the Sushi domain; the sequence is DSCPKPPEIENGYVEHLVRYRCQHYRLRTEGDGVYTLNSEKQWVNTAAGERLPECEA. 4 disulfides stabilise this stretch: cysteine 52-cysteine 85, cysteine 89-cysteine 206, cysteine 249-cysteine 280, and cysteine 291-cysteine 321. Residues 102–344 form the Peptidase S1 domain; sequence IIGGSLDAKG…FLDWIQETMA (243 aa). N-linked (GlcNAc...) asparagine glycans are attached at residues asparagine 147 and asparagine 181. The segment at 258–263 is interaction with CD163; that stretch reads VPEKEG.

The protein belongs to the peptidase S1 family. Tetramer of two alpha and two beta chains; disulfide-linked. The hemoglobin/haptoglobin complex is composed of a haptoglobin dimer bound to two hemoglobin alpha-beta dimers. Interacts with CD163. Interacts with ERGIC3. In terms of tissue distribution, expressed by the liver and secreted in plasma.

It is found in the secreted. Functionally, as a result of hemolysis, hemoglobin is found to accumulate in the kidney and is secreted in the urine. Haptoglobin captures, and combines with free plasma hemoglobin to allow hepatic recycling of heme iron and to prevent kidney damage. Haptoglobin also acts as an antioxidant, has antibacterial activity and plays a role in modulating many aspects of the acute phase response. Hemoglobin/haptoglobin complexes are rapidly cleared by the macrophage CD163 scavenger receptor expressed on the surface of liver Kupfer cells through an endocytic lysosomal degradation pathway. This is Haptoglobin (HP) from Mesocricetus auratus (Golden hamster).